Here is a 163-residue protein sequence, read N- to C-terminus: Nucleotide-binding protein YajQ (163 aa).

The protein belongs to the YajQ family.

Nucleotide-binding protein. The polypeptide is Nucleotide-binding protein YajQ (Salmonella heidelberg (strain SL476)).